The following is a 207-amino-acid chain: Small heat shock protein hspG7 (207 aa).

The region spanning 30–207 (KTIIDILPPM…YSNTIKININ (178 aa)) is the sHSP domain. 2 stretches are compositionally biased toward low complexity: residues 84-101 (QQQQ…SSST) and 122-135 (STTS…ATTT). Positions 84–149 (QQQQLVIEKS…EDENKTKSSD (66 aa)) are disordered. Basic and acidic residues predominate over residues 136 to 149 (KENKEDENKTKSSD).

This sequence belongs to the small heat shock protein (HSP20) family.

The polypeptide is Small heat shock protein hspG7 (hspG7) (Dictyostelium discoideum (Social amoeba)).